The primary structure comprises 448 residues: uncharacterized protein (448 aa).

The residue at position 297 (Lys-297) is an N6-(pyridoxal phosphate)lysine.

It belongs to the class-III pyridoxal-phosphate-dependent aminotransferase family. Pyridoxal 5'-phosphate is required as a cofactor.

This is an uncharacterized protein from Sinorhizobium fredii (strain NBRC 101917 / NGR234).